Here is a 378-residue protein sequence, read N- to C-terminus: UPF0754 membrane protein BC_0879 (378 aa).

A helical transmembrane segment spans residues 357 to 377 (YLGALLGGMIGLVQGLLLLFL).

Belongs to the UPF0754 family.

Its subcellular location is the cell membrane. The chain is UPF0754 membrane protein BC_0879 from Bacillus cereus (strain ATCC 14579 / DSM 31 / CCUG 7414 / JCM 2152 / NBRC 15305 / NCIMB 9373 / NCTC 2599 / NRRL B-3711).